Reading from the N-terminus, the 110-residue chain is Small ribosomal subunit protein bS16 (110 aa).

Positions 87-110 are disordered; sequence ARNNPEKAVPRKERKAAAEAAAKK.

Belongs to the bacterial ribosomal protein bS16 family.

The protein is Small ribosomal subunit protein bS16 of Rhodopseudomonas palustris (strain BisA53).